A 491-amino-acid chain; its full sequence is Probable cytosol aminopeptidase (491 aa).

2 residues coordinate Mn(2+): Lys-263 and Asp-268. Lys-275 is an active-site residue. Mn(2+) contacts are provided by Asp-286, Asp-345, and Glu-347. The active site involves Arg-349.

Belongs to the peptidase M17 family. It depends on Mn(2+) as a cofactor.

Its subcellular location is the cytoplasm. It catalyses the reaction Release of an N-terminal amino acid, Xaa-|-Yaa-, in which Xaa is preferably Leu, but may be other amino acids including Pro although not Arg or Lys, and Yaa may be Pro. Amino acid amides and methyl esters are also readily hydrolyzed, but rates on arylamides are exceedingly low.. It carries out the reaction Release of an N-terminal amino acid, preferentially leucine, but not glutamic or aspartic acids.. Its function is as follows. Presumably involved in the processing and regular turnover of intracellular proteins. Catalyzes the removal of unsubstituted N-terminal amino acids from various peptides. The polypeptide is Probable cytosol aminopeptidase (Haemophilus influenzae (strain PittEE)).